The chain runs to 233 residues: MILIASPFSLAHLEYLHTWHVTIKNIAQQHGLDIKVAIVVSTSHLNNFLPISGALNIECITFPSCGIKEIDLLWARIKLFQHYCAIGARLLWLVSADIRPPVSAWPAIADSLKKGADAVVIPYPSRWNNLIPTVIKEIVVHQKKCLVAVDARHLDTDTQIVGAGMGCIVLTLKALMVRLSIGKQPVKILWPDLHGTAEGIPLEGVEVGWFLNAYAHKLNIRCLGADHIAQHLT.

The protein belongs to the asfivirus H233R family.

This is an uncharacterized protein from African swine fever virus (strain Badajoz 1971 Vero-adapted) (Ba71V).